The following is a 463-amino-acid chain: UDP-N-acetylmuramoyl-L-alanyl-D-glutamate--2,6-diaminopimelate ligase (463 aa).

Residue T21 coordinates UDP-N-acetyl-alpha-D-muramoyl-L-alanyl-D-glutamate. 94–100 (GTNGKTT) contributes to the ATP binding site. Residues 137–138 (TT), S164, Q170, and R172 contribute to the UDP-N-acetyl-alpha-D-muramoyl-L-alanyl-D-glutamate site. N6-carboxylysine is present on K204. Residues R358, 382-385 (DNPR), G433, and E437 each bind meso-2,6-diaminopimelate. The short motif at 382–385 (DNPR) is the Meso-diaminopimelate recognition motif element.

The protein belongs to the MurCDEF family. MurE subfamily. It depends on Mg(2+) as a cofactor. In terms of processing, carboxylation is probably crucial for Mg(2+) binding and, consequently, for the gamma-phosphate positioning of ATP.

It localises to the cytoplasm. The catalysed reaction is UDP-N-acetyl-alpha-D-muramoyl-L-alanyl-D-glutamate + meso-2,6-diaminopimelate + ATP = UDP-N-acetyl-alpha-D-muramoyl-L-alanyl-gamma-D-glutamyl-meso-2,6-diaminopimelate + ADP + phosphate + H(+). It functions in the pathway cell wall biogenesis; peptidoglycan biosynthesis. Functionally, catalyzes the addition of meso-diaminopimelic acid to the nucleotide precursor UDP-N-acetylmuramoyl-L-alanyl-D-glutamate (UMAG) in the biosynthesis of bacterial cell-wall peptidoglycan. In Helicobacter hepaticus (strain ATCC 51449 / 3B1), this protein is UDP-N-acetylmuramoyl-L-alanyl-D-glutamate--2,6-diaminopimelate ligase.